The chain runs to 295 residues: Ethanolamine ammonia-lyase small subunit (295 aa).

Residues V207, E228, and C258 each contribute to the adenosylcob(III)alamin site.

Belongs to the EutC family. In terms of assembly, the basic unit is a heterodimer which dimerizes to form tetramers. The heterotetramers trimerize; 6 large subunits form a core ring with 6 small subunits projecting outwards. Requires adenosylcob(III)alamin as cofactor.

The protein resides in the bacterial microcompartment. The enzyme catalyses ethanolamine = acetaldehyde + NH4(+). It participates in amine and polyamine degradation; ethanolamine degradation. Functionally, catalyzes the deamination of various vicinal amino-alcohols to oxo compounds. Allows this organism to utilize ethanolamine as the sole source of nitrogen and carbon in the presence of external vitamin B12. The polypeptide is Ethanolamine ammonia-lyase small subunit (Escherichia coli (strain SE11)).